Consider the following 85-residue polypeptide: Large ribosomal subunit protein bL27 (85 aa).

It belongs to the bacterial ribosomal protein bL27 family.

The chain is Large ribosomal subunit protein bL27 from Leptospira biflexa serovar Patoc (strain Patoc 1 / Ames).